The primary structure comprises 411 residues: Serine hydroxymethyltransferase (411 aa).

Residues Leu-113 and 117–119 (GHL) contribute to the (6S)-5,6,7,8-tetrahydrofolate site. The residue at position 222 (Lys-222) is an N6-(pyridoxal phosphate)lysine. 346 to 348 (SPF) contributes to the (6S)-5,6,7,8-tetrahydrofolate binding site.

This sequence belongs to the SHMT family. As to quaternary structure, homodimer. Pyridoxal 5'-phosphate serves as cofactor.

The protein resides in the cytoplasm. The catalysed reaction is (6R)-5,10-methylene-5,6,7,8-tetrahydrofolate + glycine + H2O = (6S)-5,6,7,8-tetrahydrofolate + L-serine. Its pathway is one-carbon metabolism; tetrahydrofolate interconversion. It functions in the pathway amino-acid biosynthesis; glycine biosynthesis; glycine from L-serine: step 1/1. Catalyzes the reversible interconversion of serine and glycine with tetrahydrofolate (THF) serving as the one-carbon carrier. This reaction serves as the major source of one-carbon groups required for the biosynthesis of purines, thymidylate, methionine, and other important biomolecules. Also exhibits THF-independent aldolase activity toward beta-hydroxyamino acids, producing glycine and aldehydes, via a retro-aldol mechanism. The sequence is that of Serine hydroxymethyltransferase from Prochlorococcus marinus (strain NATL2A).